The primary structure comprises 1044 residues: Unconventional myosin-Ic (1044 aa).

Residues 28 to 712 (GVQDFVLLEN…TLFATEDSLE (685 aa)) form the Myosin motor domain. ATP-binding positions include asparagine 69, tyrosine 77, 120–129 (SGESGAGKTE), and 173–177 (NDNSS). Lysine 364 carries the N6-methyllysine modification. Serine 389 bears the Phosphoserine mark. Lysine 467 carries the N6-acetyllysine modification. Position 517 is a phosphoserine (serine 517). The segment at 589-611 (LLQLVEILRSKEPAYIRCIKPND) is actin-binding. IQ domains lie at 715 to 744 (RQSL…SAIC) and 738 to 767 (VKRS…AAQT). Serine 845 and serine 1022 each carry phosphoserine. The region spanning 866 to 1040 (KDNYPQSVPR…NGHLAVVAPR (175 aa)) is the TH1 domain.

It belongs to the TRAFAC class myosin-kinesin ATPase superfamily. Myosin family. As to quaternary structure, interacts (via its IQ motifs) with CABP1 and CIB1; the interaction with CABP1 and CIB1 is calcium-dependent. Interacts (via tail domain) with PLEKHB1 (via PH domain); the interaction is not affected by the presence or absence of calcium and CALM. Interacts with POLR1A. Interacts with POLR2A. Component of the B-WICH complex, at least composed of SMARCA5/SNF2H, BAZ1B/WSTF, SF3B1, DEK, MYO1C, ERCC6, MYBBP1A and DDX21. Interacts (via its IQ motifs) with CALM; this precludes interaction with YWHAB. Interacts with YWHAB; this precludes interaction with CALM. Interacts with RPS6. Interacts with actin. Interacts with LLPH. Interacts with GLUT4. Interacts (via its IQ motifs) with SH3BGRL3; the interaction is dependent on calcium and takes place at membrane ruffles.

It localises to the cytoplasm. The protein localises to the nucleus. Its subcellular location is the cell cortex. It is found in the cell projection. The protein resides in the stereocilium membrane. It localises to the cytoplasmic vesicle. The protein localises to the ruffle membrane. In terms of biological role, myosins are actin-based motor molecules with ATPase activity. Unconventional myosins serve in intracellular movements. Their highly divergent tails are presumed to bind to membranous compartments, which would be moved relative to actin filaments. Involved in glucose transporter recycling in response to insulin by regulating movement of intracellular GLUT4-containing vesicles to the plasma membrane. Component of the hair cell's (the sensory cells of the inner ear) adaptation-motor complex. Acts as a mediator of adaptation of mechanoelectrical transduction in stereocilia of vestibular hair cells. Binds phosphoinositides and links the actin cytoskeleton to cellular membranes. In Rattus norvegicus (Rat), this protein is Unconventional myosin-Ic (Myo1c).